The following is a 424-amino-acid chain: Histidine--tRNA ligase (424 aa).

It belongs to the class-II aminoacyl-tRNA synthetase family. As to quaternary structure, homodimer.

The protein localises to the cytoplasm. The enzyme catalyses tRNA(His) + L-histidine + ATP = L-histidyl-tRNA(His) + AMP + diphosphate + H(+). The protein is Histidine--tRNA ligase of Francisella philomiragia subsp. philomiragia (strain ATCC 25017 / CCUG 19701 / FSC 153 / O#319-036).